The chain runs to 452 residues: Glucose-6-phosphate isomerase (452 aa).

Catalysis depends on Glu290, which acts as the Proton donor. Residues His311 and Lys425 contribute to the active site.

This sequence belongs to the GPI family.

It is found in the cytoplasm. The enzyme catalyses alpha-D-glucose 6-phosphate = beta-D-fructose 6-phosphate. Its pathway is carbohydrate biosynthesis; gluconeogenesis. The protein operates within carbohydrate degradation; glycolysis; D-glyceraldehyde 3-phosphate and glycerone phosphate from D-glucose: step 2/4. Its function is as follows. Catalyzes the reversible isomerization of glucose-6-phosphate to fructose-6-phosphate. This Limosilactobacillus reuteri (strain DSM 20016) (Lactobacillus reuteri) protein is Glucose-6-phosphate isomerase.